Consider the following 778-residue polypeptide: Protein translocase subunit SecA 2 (778 aa).

ATP contacts are provided by residues Q94, 112-116 (GEGKT), and D501.

It belongs to the SecA family. In terms of assembly, monomer and homodimer. Part of the essential Sec protein translocation apparatus which comprises SecA, SecYEG and auxiliary proteins SecDF. Other proteins may also be involved.

It is found in the cell membrane. The protein resides in the cytoplasm. It catalyses the reaction ATP + H2O + cellular proteinSide 1 = ADP + phosphate + cellular proteinSide 2.. Part of the Sec protein translocase complex. Interacts with the SecYEG preprotein conducting channel. Has a central role in coupling the hydrolysis of ATP to the transfer of proteins into and across the cell membrane, serving as an ATP-driven molecular motor driving the stepwise translocation of polypeptide chains across the membrane. This chain is Protein translocase subunit SecA 2, found in Mycobacterium leprae (strain TN).